The primary structure comprises 811 residues: Ribosome biogenesis protein ERB1 (811 aa).

Polar residues predominate over residues 1-11 (MARNSKATDTP). A disordered region spans residues 1 to 138 (MARNSKATDT…VHTKFSDGRP (138 aa)). The span at 27-96 (EDAEESSSDE…LSDVDSEEFS (70 aa)) shows a compositional bias: acidic residues. Over residues 104 to 121 (ASITDKLSGTKIRSYSNA) the composition is skewed to polar residues. Residues 128–138 (EVHTKFSDGRP) show a composition bias toward basic and acidic residues. The tract at residues 270–386 (RFVPSKHEAK…LRKVPGYQEG (117 aa)) is required for interaction with NOP7. Positions 386–422 (GLRERFERCLDLYLAPRTRHNKLNIDPDSLIPELPSP) are required for interaction with YTM1. 2 WD repeats span residues 438–477 (GHTE…QVYK) and 485–525 (NTDD…FDIE). The tract at residues 547–566 (TKNSNIKVNSDDEDEEVEKA) is disordered. WD repeat units lie at residues 595 to 637 (QCRK…SQSP), 640 to 678 (KSKG…LVKK), 681 to 720 (PGAR…TPYK), 724 to 764 (YHDK…DLMT), and 780 to 811 (INSL…LWTT).

Belongs to the WD repeat BOP1/ERB1 family. Component of the NOP7 complex, composed of ERB1, NOP7 and YTM1. The complex is held together by ERB1, which interacts with NOP7 via its N-terminal domain and with YTM1 via a high-affinity interaction between the seven-bladed beta-propeller domains of the 2 proteins. The NOP7 complex associates with the 66S pre-ribosome.

Its subcellular location is the nucleus. The protein localises to the nucleolus. It is found in the nucleoplasm. Component of the NOP7 complex, which is required for maturation of the 25S and 5.8S ribosomal RNAs and formation of the 60S ribosome. This is Ribosome biogenesis protein ERB1 from Debaryomyces hansenii (strain ATCC 36239 / CBS 767 / BCRC 21394 / JCM 1990 / NBRC 0083 / IGC 2968) (Yeast).